Reading from the N-terminus, the 149-residue chain is 3-dehydroquinate dehydratase 2 (149 aa).

The active-site Proton acceptor is Y24. Substrate is bound by residues N75, H81, and D88. Catalysis depends on H101, which acts as the Proton donor. Residues 102 to 103 (LS) and R112 each bind substrate.

This sequence belongs to the type-II 3-dehydroquinase family. As to quaternary structure, homododecamer.

It catalyses the reaction 3-dehydroquinate = 3-dehydroshikimate + H2O. The protein operates within metabolic intermediate biosynthesis; chorismate biosynthesis; chorismate from D-erythrose 4-phosphate and phosphoenolpyruvate: step 3/7. In terms of biological role, catalyzes a trans-dehydration via an enolate intermediate. The sequence is that of 3-dehydroquinate dehydratase 2 (aroQ2) from Pseudomonas putida (strain ATCC 47054 / DSM 6125 / CFBP 8728 / NCIMB 11950 / KT2440).